A 105-amino-acid polypeptide reads, in one-letter code: MITDEEIRKVIAPLLLSGAKMLDKHCPKCGSPLFEKDGRVFCPVCEYREKKKREEMKGVEEVLMEKFKDLAFSLPKDVNELMQHLDAMEKLLTIIERYRKLEGRG.

This sequence belongs to the UPF0148 family.

This is UPF0148 protein PYRAB12700 from Pyrococcus abyssi (strain GE5 / Orsay).